Consider the following 127-residue polypeptide: MYIIMGVFTTIVNIASFYILVEIMNVDYKAATVAAWILSVLFAYITNKLYVFQQKTHDLQSLLKELTAFFSVRVLSLGIDLGMMIILVGQFNTNETLAKILDNAVIVVVNYVASKWLVFKKTKEEGV.

4 helical membrane passes run 1-21 (MYII…YILV), 32-52 (TVAA…LYVF), 68-88 (AFFS…IILV), and 100-120 (ILDN…LVFK).

This sequence belongs to the GtrA family.

The protein localises to the cell membrane. This is an uncharacterized protein from Bacillus subtilis (strain 168).